A 425-amino-acid chain; its full sequence is Proline--tRNA ligase (425 aa).

The protein belongs to the class-II aminoacyl-tRNA synthetase family. ProS type 2 subfamily. Homodimer.

The protein localises to the cytoplasm. It catalyses the reaction tRNA(Pro) + L-proline + ATP = L-prolyl-tRNA(Pro) + AMP + diphosphate. Its function is as follows. Catalyzes the attachment of proline to tRNA(Pro) in a two-step reaction: proline is first activated by ATP to form Pro-AMP and then transferred to the acceptor end of tRNA(Pro). This is Proline--tRNA ligase from Wolbachia sp. subsp. Brugia malayi (strain TRS).